A 114-amino-acid chain; its full sequence is Superoxide dismutase [Cu-Zn] (114 aa).

Residues His37, His39, and His54 each coordinate Cu cation. Positions 48–68 are disordered; the sequence is CMSSGPHFNPRNKEHGAPTDE. Positions 54, 62, 71, and 74 each coordinate Zn(2+). Residues 58-68 are compositionally biased toward basic and acidic residues; sequence RNKEHGAPTDE. Cu cation is bound at residue His111.

The protein belongs to the Cu-Zn superoxide dismutase family. In terms of assembly, homodimer. The cofactor is Cu cation. It depends on Zn(2+) as a cofactor.

It is found in the cytoplasm. It catalyses the reaction 2 superoxide + 2 H(+) = H2O2 + O2. Functionally, destroys radicals which are normally produced within the cells and which are toxic to biological systems. In Drosophila miranda (Fruit fly), this protein is Superoxide dismutase [Cu-Zn].